A 446-amino-acid chain; its full sequence is ATP-dependent protease ATPase subunit HslU (446 aa).

ATP is bound by residues valine 17, 59 to 64 (GVGKTE), aspartate 255, glutamate 320, and arginine 392.

The protein belongs to the ClpX chaperone family. HslU subfamily. In terms of assembly, a double ring-shaped homohexamer of HslV is capped on each side by a ring-shaped HslU homohexamer. The assembly of the HslU/HslV complex is dependent on binding of ATP.

Its subcellular location is the cytoplasm. ATPase subunit of a proteasome-like degradation complex; this subunit has chaperone activity. The binding of ATP and its subsequent hydrolysis by HslU are essential for unfolding of protein substrates subsequently hydrolyzed by HslV. HslU recognizes the N-terminal part of its protein substrates and unfolds these before they are guided to HslV for hydrolysis. The protein is ATP-dependent protease ATPase subunit HslU of Azotobacter vinelandii (strain DJ / ATCC BAA-1303).